A 230-amino-acid polypeptide reads, in one-letter code: Urease accessory protein UreE (230 aa).

Basic and acidic residues-rich tracts occupy residues 182-193 (HVHVDSPLDEPH) and 204-230 (SHGDGHSHSHSHDHDHDHRHDDHDHKH). The interval 182–230 (HVHVDSPLDEPHGSGLHVHAIHSHGDGHSHSHSHDHDHDHRHDDHDHKH) is disordered.

The protein belongs to the UreE family.

It is found in the cytoplasm. Its function is as follows. Involved in urease metallocenter assembly. Binds nickel. Probably functions as a nickel donor during metallocenter assembly. This is Urease accessory protein UreE from Yersinia mollaretii.